The following is an 88-amino-acid chain: Cold-regulated protein BLT14 (88 aa).

This chain is Cold-regulated protein BLT14 (BLT14), found in Hordeum vulgare (Barley).